We begin with the raw amino-acid sequence, 511 residues long: GMP synthase [glutamine-hydrolyzing] (511 aa).

In terms of domain architecture, Glutamine amidotransferase type-1 spans 5–195 (LILVLDFGGQ…LYKICGCSGD (191 aa)). The Nucleophile role is filled by Cys82. Residues His169 and Glu171 contribute to the active site. One can recognise a GMPS ATP-PPase domain in the interval 196-386 (WKMASFIEHS…LGIPEDIVMR (191 aa)). Residue 223-229 (SGGVDSS) participates in ATP binding.

As to quaternary structure, homodimer.

The enzyme catalyses XMP + L-glutamine + ATP + H2O = GMP + L-glutamate + AMP + diphosphate + 2 H(+). It functions in the pathway purine metabolism; GMP biosynthesis; GMP from XMP (L-Gln route): step 1/1. Functionally, catalyzes the synthesis of GMP from XMP. This chain is GMP synthase [glutamine-hydrolyzing], found in Acetivibrio thermocellus (strain ATCC 27405 / DSM 1237 / JCM 9322 / NBRC 103400 / NCIMB 10682 / NRRL B-4536 / VPI 7372) (Clostridium thermocellum).